A 237-amino-acid polypeptide reads, in one-letter code: Ribosomal RNA small subunit methyltransferase G (237 aa).

S-adenosyl-L-methionine-binding positions include Gly78, Phe83, Ala129–Glu130, and Arg148.

This sequence belongs to the methyltransferase superfamily. RNA methyltransferase RsmG family.

It localises to the cytoplasm. Its function is as follows. Specifically methylates the N7 position of a guanine in 16S rRNA. This chain is Ribosomal RNA small subunit methyltransferase G, found in Streptococcus thermophilus (strain CNRZ 1066).